The following is a 173-amino-acid chain: Propanediol dehydratase small subunit (173 aa).

The protein belongs to the diol/glycerol dehydratase small subunit family. As to quaternary structure, the propanediol dehydratase enzyme is a heterotrimeric complex composed of a large (PduC), a medium (PduD) and a small (PduE) subunit. Requires adenosylcob(III)alamin as cofactor.

The protein resides in the bacterial microcompartment. The catalysed reaction is propane-1,2-diol = propanal + H2O. Its pathway is polyol metabolism; 1,2-propanediol degradation. With respect to regulation, inhibited by glycerol. Its function is as follows. Part of the PduCDE complex that catalyzes the dehydration of 1,2-propanediol (1,2-PD) to propionaldehyde. Required for S.typhimurium growth on 1,2-PD as the sole carbon and energy source. Localized in the bacterial microcompartment (BMC) dedicated to 1,2-PD degradation. The 1,2-PD-specific bacterial microcompartment (BMC) concentrates low levels of 1,2-PD catabolic enzymes, concentrates volatile reaction intermediates thus enhancing pathway flux and keeps the level of toxic, mutagenic propionaldehyde low. This chain is Propanediol dehydratase small subunit, found in Salmonella typhimurium (strain LT2 / SGSC1412 / ATCC 700720).